The sequence spans 283 residues: SNF1-related protein kinase regulatory subunit beta-1 (283 aa).

Residues 1–10 (MGNANGKDED) show a composition bias toward basic and acidic residues. Residues 1-63 (MGNANGKDED…PARSPSPFLF (63 aa)) are disordered. Gly-2 carries N-myristoyl glycine lipidation. Positions 43-60 (SDSMSSSPPGSPARSPSP) are enriched in low complexity. Residues 101 to 178 (PTIITWNQGG…VGNVCNILDV (78 aa)) are kinase-interacting sequence (KIS). An association with SNF1 complex (ASC) region spans residues 215-283 (EPLAVPPQLH…TVVLYKPLTR (69 aa)).

Belongs to the 5'-AMP-activated protein kinase beta subunit family. In terms of assembly, subunit of a probable heterotrimeric complex consisting of an alpha catalytic (KIN10 or KIN11) subunit, and a beta (KINB) and a gamma (KING or SNF4) non-catalytic regulatory subunits. Interacts with SNF4 and CBL1. Interacts with FLZ1, FLZ2, FLZ8, FLZ9, FLZ10, FLZ12, FLZ13, FLZ14 and FLZ15. Post-translationally, sumoylated by SIZ1. As to expression, expressed in vegetative organs and, to lower extent, in reproductive organs.

It localises to the cell membrane. Regulatory subunit of the probable trimeric SNF1-related protein kinase (SnRK) complex, which may play a role in a signal transduction cascade regulating gene expression and carbohydrate metabolism in higher plants. The SnRK complex may also be involved in the regulation of fatty acid synthesis by phosphorylation of acetyl-CoA carboxylase and in assimilation of nitrogen by phosphorylating nitrate reductase. In Arabidopsis thaliana (Mouse-ear cress), this protein is SNF1-related protein kinase regulatory subunit beta-1 (KINB1).